A 170-amino-acid polypeptide reads, in one-letter code: Probable T4-type lysozyme 1 (170 aa).

Glu-13 acts as the Proton donor in catalysis. Residue Asp-22 is the Nucleophile of the active site.

The protein belongs to the glycosyl hydrolase 24 family.

The catalysed reaction is Hydrolysis of (1-&gt;4)-beta-linkages between N-acetylmuramic acid and N-acetyl-D-glucosamine residues in a peptidoglycan and between N-acetyl-D-glucosamine residues in chitodextrins.. In Dictyostelium discoideum (Social amoeba), this protein is Probable T4-type lysozyme 1.